The following is a 346-amino-acid chain: Ferredoxin--NADP reductase (346 aa).

Residues E35, Q43, Y48, V88, F122, D287, and T327 each contribute to the FAD site.

Belongs to the ferredoxin--NADP reductase type 2 family. In terms of assembly, homodimer. FAD is required as a cofactor.

It catalyses the reaction 2 reduced [2Fe-2S]-[ferredoxin] + NADP(+) + H(+) = 2 oxidized [2Fe-2S]-[ferredoxin] + NADPH. This is Ferredoxin--NADP reductase from Oenococcus oeni (strain ATCC BAA-331 / PSU-1).